We begin with the raw amino-acid sequence, 561 residues long: Transmembrane protein 209 (561 aa).

At serine 11 the chain carries Phosphoserine. The chain crosses the membrane as a helical span at residues valine 28–threonine 48. N-linked (GlcNAc...) asparagine glycosylation occurs at asparagine 57. Residues tyrosine 60 to phenylalanine 80 form a helical membrane-spanning segment. Phosphoserine is present on serine 98. Disordered stretches follow at residues leucine 120–threonine 156 and serine 200–lysine 232. Positions serine 138–proline 152 are enriched in low complexity. 2 positions are modified to phosphoserine: serine 201 and serine 248. The disordered stretch occupies residues glutamate 250–proline 270. Positions serine 260 to proline 270 are enriched in low complexity. The N-linked (GlcNAc...) asparagine glycan is linked to asparagine 274. Residue serine 278 is modified to Phosphoserine.

As to quaternary structure, interacts with NUP205.

Its subcellular location is the membrane. The protein resides in the nucleus envelope. The protein localises to the golgi apparatus. It is found in the cytoplasm. Functionally, nuclear envelope protein which in association with NUP205, may be involved in nuclear transport of various nuclear proteins in addition to MYC. In Mus musculus (Mouse), this protein is Transmembrane protein 209 (Tmem209).